We begin with the raw amino-acid sequence, 87 residues long: MVNMKASMFLTFAGLVLLFVVCYASESEEKEFPKEMLSSIFAVDNDFKQEERDCAGYMRECKEKLCCSGYVCSSRWKWCVLPAPWRC.

A signal peptide spans 1-24 (MVNMKASMFLTFAGLVLLFVVCYA). Residues 25 to 52 (SESEEKEFPKEMLSSIFAVDNDFKQEER) constitute a propeptide that is removed on maturation. 3 cysteine pairs are disulfide-bonded: cysteine 54–cysteine 67, cysteine 61–cysteine 72, and cysteine 66–cysteine 79.

This sequence belongs to the neurotoxin 10 (Hwtx-1) family. 51 (Hntx-8) subfamily. Hntx-8 sub-subfamily. Expressed by the venom gland.

It is found in the secreted. Functionally, ion channel inhibitor. This Cyriopagopus hainanus (Chinese bird spider) protein is U3-theraphotoxin-Hhn1a 5.